Here is a 116-residue protein sequence, read N- to C-terminus: Nitrogenase-stabilizing/protective protein NifW (116 aa).

Belongs to the NifW family. Homotrimer; associates with NifD.

Functionally, may protect the nitrogenase Fe-Mo protein from oxidative damage. The chain is Nitrogenase-stabilizing/protective protein NifW from Rhodopseudomonas palustris (strain TIE-1).